The primary structure comprises 617 residues: Sphingosine kinase 2 (617 aa).

Residues 1-140 (MAPPPLLPVA…LSGDQEITPE (140 aa)) are required for binding to sulfatide and phosphoinositides and for membrane localization. A Nuclear localization signal motif is present at residues 87 to 95 (RGRRGGRRR). The 148-residue stretch at 143 to 290 (PRKPRLLILV…LDLLSVTLAS (148 aa)) folds into the DAGKc domain. Residues 153–155 (NPF) and 185–189 (TERQN) each bind ATP. 210–213 (SGDG) contacts substrate. Asp-212 (proton donor/acceptor) is an active-site residue. ATP-binding positions include Glu-217 and 242–244 (GSG). Asp-309 contributes to the substrate binding site. Positions 316 and 322 each coordinate ATP. Phosphoserine is present on residues Ser-358 and Ser-364. The disordered stretch occupies residues 371–472 (APAPAATHSP…GFLPPTHSAP (102 aa)). Residue Thr-377 is modified to Phosphothreonine. The short motif at 381-390 (LHRSVSDLPL) is the Nuclear export signal element. Phosphoserine occurs at positions 384 and 386. Gly residues predominate over residues 412-426 (NGGGPELTGDWGGAG). Thr-578 bears the Phosphothreonine mark. An ATP-binding site is contributed by 586 to 588 (DGE).

In terms of assembly, interacts with histone H3. Interacts with HDAC1, HDAC2, MBD2 and SIN3A. Interacts with EEF1A1; the interaction enhances SPHK2 kinase activity. Interacts with PHB2. Mg(2+) serves as cofactor. Post-translationally, phosphorylated by PKD on Ser-384 and Ser-386 upon PMA treatment. Phosphorylation induces export from the nucleus to the cytoplasm. Phosphorylated by MAPK1 and MAPK2 at Thr-578, phosphorylation is induced by agonists such as EGF and PMA and increases kinase activity. In terms of processing, cleaved by CASP1 in apoptotic cells. The truncated form is released from cells. As to expression, expressed in heart, brain, liver, kidney and testis. Expressed by mast cells (at protein level). In the substantia nigra, expressed by dopaminergic neurons (at protein level).

The protein localises to the lysosome membrane. It localises to the cytoplasm. The protein resides in the cell membrane. Its subcellular location is the endoplasmic reticulum. It is found in the nucleus. The protein localises to the mitochondrion inner membrane. It catalyses the reaction a sphingoid base + ATP = a sphingoid 1-phosphate + ADP + H(+). It carries out the reaction sphing-4-enine + ATP = sphing-4-enine 1-phosphate + ADP + H(+). The catalysed reaction is sphinganine + ATP = sphinganine 1-phosphate + ADP + H(+). The enzyme catalyses (4R)-hydroxysphinganine + ATP = (4R)-hydroxysphinganine 1-phosphate + ADP + H(+). Catalyzes the phosphorylation of sphingosine to form sphingosine-1-phosphate (SPP), a lipid mediator with both intra- and extracellular functions. Also acts on D-erythro-dihydrosphingosine, D-erythro-sphingosine and L-threo-dihydrosphingosine. Binds phosphoinositides. In contrast to prosurvival SPHK1, has a positive effect on intracellular ceramide levels, inhibits cells growth and enhances apoptosis. In mitochondria, is important for cytochrome-c oxidase assembly and mitochondrial respiration. The SPP produced in mitochondria binds PHB2 and modulates the regulation via PHB2 of complex IV assembly and respiration. In nucleus, plays a role in epigenetic regulation of gene expression. Interacts with HDAC1 and HDAC2 and, through SPP production, inhibits their enzymatic activity, preventing the removal of acetyl groups from lysine residues with histones. Up-regulates acetylation of histone H3-K9, histone H4-K5 and histone H2B-K12. In nucleus, may have an inhibitory effect on DNA synthesis and cell cycle. In mast cells, is the main regulator of SPP production which mediates calcium influx, NF-kappa-B activation, cytokine production, such as TNF and IL6, and degranulation of mast cells. In dopaminergic neurons, is involved in promoting mitochondrial functions regulating ATP and ROS levels. Also involved in the regulation of glucose and lipid metabolism. In Mus musculus (Mouse), this protein is Sphingosine kinase 2.